Reading from the N-terminus, the 904-residue chain is DNA mismatch repair protein MutS (904 aa).

655–662 (GPNMGGKS) lines the ATP pocket.

The protein belongs to the DNA mismatch repair MutS family.

Functionally, this protein is involved in the repair of mismatches in DNA. It is possible that it carries out the mismatch recognition step. This protein has a weak ATPase activity. The polypeptide is DNA mismatch repair protein MutS (Agrobacterium fabrum (strain C58 / ATCC 33970) (Agrobacterium tumefaciens (strain C58))).